A 293-amino-acid polypeptide reads, in one-letter code: 3-methyl-2-oxobutanoate hydroxymethyltransferase (293 aa).

Residues 1-26 (MTQAPVTAGTPYGTIPPASPLPQRRP) are disordered. Asp68 and Asp111 together coordinate Mg(2+). 3-methyl-2-oxobutanoate is bound by residues 68–69 (DS), Asp111, and Lys140. Glu142 lines the Mg(2+) pocket. Glu209 functions as the Proton acceptor in the catalytic mechanism.

The protein belongs to the PanB family. In terms of assembly, homodecamer; pentamer of dimers. Mg(2+) serves as cofactor.

The protein localises to the cytoplasm. It catalyses the reaction 3-methyl-2-oxobutanoate + (6R)-5,10-methylene-5,6,7,8-tetrahydrofolate + H2O = 2-dehydropantoate + (6S)-5,6,7,8-tetrahydrofolate. It functions in the pathway cofactor biosynthesis; (R)-pantothenate biosynthesis; (R)-pantoate from 3-methyl-2-oxobutanoate: step 1/2. Its function is as follows. Catalyzes the reversible reaction in which hydroxymethyl group from 5,10-methylenetetrahydrofolate is transferred onto alpha-ketoisovalerate to form ketopantoate. This is 3-methyl-2-oxobutanoate hydroxymethyltransferase from Delftia acidovorans (strain DSM 14801 / SPH-1).